Consider the following 467-residue polypeptide: 2-succinylbenzoate--CoA ligase (467 aa).

Belongs to the ATP-dependent AMP-binding enzyme family. MenE subfamily.

The enzyme catalyses 2-succinylbenzoate + ATP + CoA = 2-succinylbenzoyl-CoA + AMP + diphosphate. It participates in quinol/quinone metabolism; 1,4-dihydroxy-2-naphthoate biosynthesis; 1,4-dihydroxy-2-naphthoate from chorismate: step 5/7. It functions in the pathway quinol/quinone metabolism; menaquinone biosynthesis. Converts 2-succinylbenzoate (OSB) to 2-succinylbenzoyl-CoA (OSB-CoA). The protein is 2-succinylbenzoate--CoA ligase of Listeria monocytogenes serovar 1/2a (strain ATCC BAA-679 / EGD-e).